A 136-amino-acid polypeptide reads, in one-letter code: MARTKQTARKSTGGKAPRKQLATKAARKSAPSTGGVKKPHRYRPGTVALREIRRYQKSTELLIRKLPFQRLAREIAQDFKTDLRFQSAAIGALQEASEAYLVGLFEDTNLCAIHAKRVTIMPKDIQLARRIRGERA.

The interval 1–43 (MARTKQTARKSTGGKAPRKQLATKAARKSAPSTGGVKKPHRYR) is disordered. Arginine 3 is modified (asymmetric dimethylarginine; by PRMT6; alternate). Arginine 3 carries the citrulline; alternate modification. Phosphothreonine; by HASPIN and VRK1 is present on threonine 4. Lysine 5 carries the allysine; alternate modification. Residue lysine 5 is modified to N6,N6,N6-trimethyllysine; alternate. N6,N6-dimethyllysine; alternate is present on lysine 5. Lysine 5 bears the N6-(2-hydroxyisobutyryl)lysine; alternate mark. Lysine 5 carries the post-translational modification N6-(beta-hydroxybutyryl)lysine; alternate. Lysine 5 carries the N6-acetyllysine; alternate modification. Lysine 5 is subject to N6-crotonyllysine; alternate. Lysine 5 bears the N6-methyllysine; alternate mark. Glutamine 6 is modified (5-glutamyl dopamine; alternate). A 5-glutamyl serotonin; alternate modification is found at glutamine 6. Threonine 7 carries the post-translational modification Phosphothreonine; by PKC. Arginine 9 is subject to Citrulline; alternate. At arginine 9 the chain carries Symmetric dimethylarginine; by PRMT5; alternate. N6,N6,N6-trimethyllysine; alternate is present on lysine 10. The residue at position 10 (lysine 10) is an N6,N6-dimethyllysine; alternate. Lysine 10 is subject to N6-(2-hydroxyisobutyryl)lysine; alternate. Position 10 is an N6-(beta-hydroxybutyryl)lysine; alternate (lysine 10). Residue lysine 10 is modified to N6-acetyllysine; alternate. Residue lysine 10 is modified to N6-crotonyllysine; alternate. Lysine 10 bears the N6-methyllysine; alternate mark. Residue lysine 10 is modified to N6-lactoyllysine; alternate. ADP-ribosylserine; alternate is present on serine 11. Serine 11 is subject to Phosphoserine; alternate; by AURKB, AURKC, RPS6KA3, RPS6KA4 and RPS6KA5. At threonine 12 the chain carries Phosphothreonine; by PKC. Position 15 is an N6-(2-hydroxyisobutyryl)lysine; alternate (lysine 15). The residue at position 15 (lysine 15) is an N6-(beta-hydroxybutyryl)lysine; alternate. Residue lysine 15 is modified to N6-acetyllysine; alternate. Lysine 15 bears the N6-lactoyllysine; alternate mark. At lysine 15 the chain carries N6-glutaryllysine; alternate. Lysine 15 is modified (N6-succinyllysine; alternate). Arginine 18 carries the post-translational modification Citrulline; alternate. Arginine 18 carries the asymmetric dimethylarginine; by CARM1; alternate modification. An N6-(2-hydroxyisobutyryl)lysine; alternate mark is found at lysine 19 and lysine 24. An N6-(beta-hydroxybutyryl)lysine; alternate mark is found at lysine 19 and lysine 24. N6-acetyllysine; alternate is present on residues lysine 19 and lysine 24. Residues lysine 19 and lysine 24 each carry the N6-crotonyllysine; alternate modification. N6-methyllysine; alternate is present on residues lysine 19 and lysine 24. N6-lactoyllysine; alternate occurs at positions 19 and 24. 2 positions are modified to N6-glutaryllysine; alternate: lysine 19 and lysine 24. An N6-butyryllysine; alternate mark is found at lysine 19 and lysine 24. Lysine 19 is lipidated: N6-decanoyllysine. Arginine 27 carries the citrulline modification. Position 28 is an N6,N6,N6-trimethyllysine; alternate (lysine 28). At lysine 28 the chain carries N6,N6-dimethyllysine; alternate. Lysine 28 is modified (N6-(2-hydroxyisobutyryl)lysine; alternate). Lysine 28 carries the post-translational modification N6-acetyllysine; alternate. Lysine 28 carries the post-translational modification N6-crotonyllysine; alternate. Position 28 is an N6-methyllysine; alternate (lysine 28). N6-lactoyllysine; alternate is present on lysine 28. At lysine 28 the chain carries N6-glutaryllysine; alternate. At serine 29 the chain carries ADP-ribosylserine; alternate. Serine 29 is subject to Phosphoserine; alternate; by AURKB, AURKC and RPS6KA5. At serine 32 the chain carries Phosphoserine. At lysine 37 the chain carries N6,N6,N6-trimethyllysine; alternate. Lysine 37 is subject to N6,N6-dimethyllysine; alternate. Lysine 37 is subject to N6-(2-hydroxyisobutyryl)lysine; alternate. The residue at position 37 (lysine 37) is an N6-acetyllysine; alternate. Residue lysine 37 is modified to N6-methyllysine; alternate. The residue at position 38 (lysine 38) is an N6-methyllysine. Tyrosine 42 bears the Phosphotyrosine mark. N6,N6,N6-trimethyllysine; alternate is present on lysine 57. Lysine 57 is modified (N6-(2-hydroxyisobutyryl)lysine; alternate). Lysine 57 bears the N6-(beta-hydroxybutyryl)lysine; alternate mark. Lysine 57 bears the N6-acetyllysine; alternate mark. Residue lysine 57 is modified to N6-crotonyllysine; alternate. N6-lactoyllysine; alternate is present on lysine 57. Lysine 57 carries the post-translational modification N6-glutaryllysine; alternate. Lysine 57 is subject to N6-succinyllysine; alternate. At lysine 57 the chain carries N6-methyllysine; by EHMT2; alternate. Serine 58 is modified (phosphoserine). Residues lysine 65 and lysine 80 each carry the N6-(2-hydroxyisobutyryl)lysine; alternate modification. Lysine 65 and lysine 80 each carry N6-methyllysine; alternate. Lysine 80 carries the post-translational modification N6,N6,N6-trimethyllysine; alternate. Lysine 80 is modified (N6,N6-dimethyllysine; alternate). Position 80 is an N6-acetyllysine; alternate (lysine 80). An N6-lactoyllysine; alternate modification is found at lysine 80. An N6-glutaryllysine; alternate modification is found at lysine 80. The residue at position 80 (lysine 80) is an N6-succinyllysine; alternate. Phosphothreonine is present on threonine 81. A Phosphoserine modification is found at serine 87. Phosphothreonine is present on threonine 108. N6-acetyllysine; alternate is present on residues lysine 116 and lysine 123. N6-glutaryllysine; alternate is present on residues lysine 116 and lysine 123. At lysine 123 the chain carries N6-(2-hydroxyisobutyryl)lysine; alternate. Position 123 is an N6-methyllysine; alternate (lysine 123). At lysine 123 the chain carries N6-succinyllysine; alternate.

The protein belongs to the histone H3 family. In terms of assembly, the nucleosome is a histone octamer containing two molecules each of H2A, H2B, H3 and H4 assembled in one H3-H4 heterotetramer and two H2A-H2B heterodimers. The octamer wraps approximately 147 bp of DNA. Interacts with HIRA, a chaperone required for its incorporation into nucleosomes. Interacts with ZMYND11; when trimethylated at 'Lys-36' (H3.3K36me3). Found in a co-chaperone complex with DNJC9, MCM2 and histone H3.3-H4 dimers. Within the complex, interacts with DNJC9 (via C-terminus); the interaction is direct. Interacts with ASF1A, MCM2, NASP and SPT2. Interacts with DAXX; the interaction is direct. Interacts with NASP; NASP is a histone chaperone that stabilizes and maintains a soluble pool of Histone H3-H4 dimers. Acetylation is generally linked to gene activation. Acetylation on Lys-10 (H3K9ac) impairs methylation at Arg-9 (H3R8me2s). Acetylation on Lys-19 (H3K18ac) and Lys-24 (H3K24ac) favors methylation at Arg-18 (H3R17me). Acetylation at Lys-123 (H3K122ac) by EP300/p300 plays a central role in chromatin structure: localizes at the surface of the histone octamer and stimulates transcription, possibly by promoting nucleosome instability. Post-translationally, citrullination at Arg-9 (H3R8ci) and/or Arg-18 (H3R17ci) by PADI4 impairs methylation and represses transcription. In terms of processing, asymmetric dimethylation at Arg-18 (H3R17me2a) by CARM1 is linked to gene activation. Symmetric dimethylation at Arg-9 (H3R8me2s) by PRMT5 is linked to gene repression. Asymmetric dimethylation at Arg-3 (H3R2me2a) by PRMT6 is linked to gene repression and is mutually exclusive with H3 Lys-5 methylation (H3K4me2 and H3K4me3). H3R2me2a is present at the 3' of genes regardless of their transcription state and is enriched on inactive promoters, while it is absent on active promoters. Specifically enriched in modifications associated with active chromatin such as methylation at Lys-5 (H3K4me), Lys-37 and Lys-80. Methylation at Lys-5 (H3K4me) facilitates subsequent acetylation of H3 and H4. Methylation at Lys-80 (H3K79me) is associated with DNA double-strand break (DSB) responses and is a specific target for TP53BP1. Methylation at Lys-10 (H3K9me) and Lys-28 (H3K27me), which are linked to gene repression, are underrepresented. Methylation at Lys-10 (H3K9me) is a specific target for HP1 proteins (CBX1, CBX3 and CBX5) and prevents subsequent phosphorylation at Ser-11 (H3S10ph) and acetylation of H3 and H4. Methylation at Lys-5 (H3K4me) and Lys-80 (H3K79me) require preliminary monoubiquitination of H2B at 'Lys-120'. Methylation at Lys-10 (H3K9me) and Lys-28 (H3K27me) are enriched in inactive X chromosome chromatin. Monomethylation at Lys-57 (H3K56me1) by EHMT2/G9A in G1 phase promotes interaction with PCNA and is required for DNA replication. Post-translationally, phosphorylated at Thr-4 (H3T3ph) by VRK1. Phosphorylated at Thr-4 (H3T3ph) by HASPIN during prophase and dephosphorylated during anaphase. Phosphorylation at Ser-11 (H3S10ph) by AURKB is crucial for chromosome condensation and cell-cycle progression during mitosis and meiosis. In addition phosphorylation at Ser-11 (H3S10ph) by RPS6KA4 and RPS6KA5 is important during interphase because it enables the transcription of genes following external stimulation, like mitogens, stress, growth factors or UV irradiation and result in the activation of genes, such as c-fos and c-jun. Phosphorylation at Ser-11 (H3S10ph), which is linked to gene activation, prevents methylation at Lys-10 (H3K9me) but facilitates acetylation of H3 and H4. Phosphorylation at Ser-11 (H3S10ph) by AURKB mediates the dissociation of HP1 proteins (CBX1, CBX3 and CBX5) from heterochromatin. Phosphorylation at Ser-11 (H3S10ph) is also an essential regulatory mechanism for neoplastic cell transformation. Phosphorylated at Ser-29 (H3S28ph) by MAP3K20 isoform 1, RPS6KA5 or AURKB during mitosis or upon ultraviolet B irradiation. Phosphorylation at Thr-7 (H3T6ph) by PRKCB is a specific tag for epigenetic transcriptional activation that prevents demethylation of Lys-5 (H3K4me) by LSD1/KDM1A. At centromeres, specifically phosphorylated at Thr-12 (H3T11ph) from prophase to early anaphase, by DAPK3 and PKN1. Phosphorylation at Thr-12 (H3T11ph) by PKN1 or isoform M2 of PKM (PKM2) is a specific tag for epigenetic transcriptional activation that promotes demethylation of Lys-10 (H3K9me) by KDM4C/JMJD2C. Phosphorylation at Tyr-42 (H3Y41ph) by JAK2 promotes exclusion of CBX5 (HP1 alpha) from chromatin. Phosphorylation on Ser-32 (H3S31ph) is specific to regions bordering centromeres in metaphase chromosomes. In terms of processing, ubiquitinated. Monoubiquitinated by RAG1 in lymphoid cells, monoubiquitination is required for V(D)J recombination. Lysine deamination at Lys-5 (H3K4all) to form allysine is mediated by LOXL2. Allysine formation by LOXL2 only takes place on H3K4me3 and results in gene repression. Post-translationally, crotonylation (Kcr) is specifically present in male germ cells and marks testis-specific genes in post-meiotic cells, including X-linked genes that escape sex chromosome inactivation in haploid cells. Crotonylation marks active promoters and enhancers and confers resistance to transcriptional repressors. It is also associated with post-meiotically activated genes on autosomes. In terms of processing, butyrylation of histones marks active promoters and competes with histone acetylation. It is present during late spermatogenesis. Succinylation at Lys-80 (H3K79succ) by KAT2A takes place with a maximum frequency around the transcription start sites of genes. It gives a specific tag for epigenetic transcription activation. Desuccinylation at Lys-123 (H3K122succ) by SIRT7 in response to DNA damage promotes chromatin condensation and double-strand breaks (DSBs) repair. Post-translationally, serine ADP-ribosylation by PARP1 or PARP2 constitutes the primary form of ADP-ribosylation of proteins in response to DNA damage. Serine ADP-ribosylation at Ser-11 (H3S10ADPr) promotes recruitment of CHD1L. H3S10ADPr is mutually exclusive with phosphorylation at Ser-11 (H3S10ph) and impairs acetylation at Lys-10 (H3K9ac). In terms of processing, serotonylated by TGM2 at Gln-6 (H3Q5ser) during serotonergic neuron differentiation. H3Q5ser is associated with trimethylation of Lys-5 (H3K4me3) and enhances general transcription factor IID (TFIID) complex-binding to H3K4me3, thereby facilitating transcription. Dopaminylated by TGM2 at Gln-6 (H3Q5dop) in ventral tegmental area (VTA) neurons. H3Q5dop mediates neurotransmission-independent role of nuclear dopamine by regulating relapse-related transcriptional plasticity in the reward system. Post-translationally, lactylated in macrophages by EP300/P300 by using lactoyl-CoA directly derived from endogenous or exogenous lactate, leading to stimulates gene transcription.

The protein resides in the nucleus. Its subcellular location is the chromosome. Functionally, variant histone H3 which replaces conventional H3 in a wide range of nucleosomes in active genes. Constitutes the predominant form of histone H3 in non-dividing cells and is incorporated into chromatin independently of DNA synthesis. Deposited at sites of nucleosomal displacement throughout transcribed genes, suggesting that it represents an epigenetic imprint of transcriptionally active chromatin. Nucleosomes wrap and compact DNA into chromatin, limiting DNA accessibility to the cellular machineries which require DNA as a template. Histones thereby play a central role in transcription regulation, DNA repair, DNA replication and chromosomal stability. DNA accessibility is regulated via a complex set of post-translational modifications of histones, also called histone code, and nucleosome remodeling. The sequence is that of Histone H3.3 from Pongo abelii (Sumatran orangutan).